The following is a 1199-amino-acid chain: Chromatin structure-remodeling complex subunit snf21 (1199 aa).

Residues 256-328 enclose the HSA domain; the sequence is QRSDRERRLK…AKQRLQALKE (73 aa). The region spanning 429–594 is the Helicase ATP-binding domain; that stretch reads ISLYNNHLNG…WALLNFVLPR (166 aa). 442-449 contacts ATP; the sequence is DEMGLGKT. The short motif at 544-547 is the DEGH box element; sequence DEGH. Residues 740–903 enclose the Helicase C-terminal domain; sequence LLDRILPKLF…STPEEREAFL (164 aa). Residues 1017–1059 form a disordered region; it reads MESEARPTRGRPKRNIASVDETPALTLNGKPKKKRGPAPDTLT. Residues 1061 to 1171 form the Bromo domain; that stretch reads EHRSLLRRVC…TAMETKIEEL (111 aa).

It belongs to the SNF2/RAD54 helicase family. Component of the RSC complex composed of at least arp9, arp42, rsc1, rsc4, rsc7, rsc9, rsc58, sfh1, snf21, ssr1, ssr2, ssr3 and ssr4. The complex interacts with histone and histone variant components of centromeric chromatin.

It localises to the nucleus. Helicase. Component of the chromatin structure remodeling complex (RSC), which is involved in transcription regulation and nucleosome positioning. Controls particularly membrane and organelle development genes. This Schizosaccharomyces pombe (strain 972 / ATCC 24843) (Fission yeast) protein is Chromatin structure-remodeling complex subunit snf21 (snf21).